Here is a 159-residue protein sequence, read N- to C-terminus: 17 kDa surface antigen (159 aa).

Residues 1-19 form the signal peptide; that stretch reads MKLLSKIMIIALATSMLQA. Residue Cys20 is the site of N-palmitoyl cysteine attachment. A lipid anchor (S-diacylglycerol cysteine) is attached at Cys20.

This sequence belongs to the rickettsiale 17 kDa surface antigen family.

Its subcellular location is the cell outer membrane. The polypeptide is 17 kDa surface antigen (omp) (Rickettsia japonica (strain ATCC VR-1363 / YH)).